We begin with the raw amino-acid sequence, 1405 residues long: DNA-directed RNA polymerase subunit beta' (1405 aa).

Cys71, Cys73, Cys86, and Cys89 together coordinate Zn(2+). Mg(2+)-binding residues include Asp462, Asp464, and Asp466. 4 residues coordinate Zn(2+): Cys810, Cys884, Cys891, and Cys894.

The protein belongs to the RNA polymerase beta' chain family. In terms of assembly, the RNAP catalytic core consists of 2 alpha, 1 beta, 1 beta' and 1 omega subunit. When a sigma factor is associated with the core the holoenzyme is formed, which can initiate transcription. It depends on Mg(2+) as a cofactor. Requires Zn(2+) as cofactor.

The enzyme catalyses RNA(n) + a ribonucleoside 5'-triphosphate = RNA(n+1) + diphosphate. Functionally, DNA-dependent RNA polymerase catalyzes the transcription of DNA into RNA using the four ribonucleoside triphosphates as substrates. The protein is DNA-directed RNA polymerase subunit beta' of Maricaulis maris (strain MCS10) (Caulobacter maris).